The chain runs to 146 residues: Protein ADM2 (146 aa).

Residues Met-1–Ser-25 form the signal peptide. A propeptide spanning residues Gly-26–Ser-96 is cleaved from the precursor. The interval Gly-29–Pro-99 is disordered. A disulfide bridge connects residues Cys-108 and Cys-113. Tyr-145 carries the tyrosine amide modification.

The protein belongs to the adrenomedullin family. As to expression, expression was restricted to the intermediate and anterior lobes of the pituitary.

The protein resides in the secreted. Intermedin/ADM2 is a peptide hormone that plays a role as physiological regulator of gastrointestinal and cardiovascular bioactivities mediated by the CALCRL-RAMPs receptor complexes. Activates the cAMP-dependent pathway through interaction with CALCRL-RAMP3 receptor complex. In Rattus norvegicus (Rat), this protein is Protein ADM2.